A 210-amino-acid polypeptide reads, in one-letter code: Glutathione S-transferase P (210 aa).

Residues 2–81 (ASYTIVYFPV…HLGRTLGLYG (80 aa)) form the GST N-terminal domain. Tyr-4 carries the post-translational modification Phosphotyrosine; by EGFR. Glutathione contacts are provided by residues Tyr-8, Arg-14, Trp-39, Lys-45, and 52 to 53 (QL). Thr-62 bears the Phosphothreonine mark. Glutathione is bound at residue 65 to 66 (QS). One can recognise a GST C-terminal domain in the interval 83-204 (DQREAALVDM…ASPEHVNRPI (122 aa)). N6-succinyllysine occurs at positions 103 and 116. Lys-128 is modified (N6-acetyllysine).

It belongs to the GST superfamily. Pi family. In terms of assembly, homodimer. Interacts with CDK5.

Its subcellular location is the cytoplasm. It is found in the mitochondrion. The protein resides in the nucleus. It catalyses the reaction RX + glutathione = an S-substituted glutathione + a halide anion + H(+). The enzyme catalyses prostaglandin J2 + glutathione = prostaglandin J2-S-(R)-glutathione. The catalysed reaction is prostaglandin J2 + glutathione = prostaglandin J2-S-(S)-glutathione. It carries out the reaction prostaglandin A2 + glutathione = prostaglandin A2-S-(S)-glutathione. It catalyses the reaction 11(S)-hydroxy-14(S),15(S)-epoxy-(5Z,8Z,12E)-eicosatrienoate + glutathione = (11S,15S)-dihydroxy-14(R)-S-glutathionyl-(5Z,8Z,12E)-eicosatrienoate. Its function is as follows. Conjugation of reduced glutathione to a wide number of exogenous and endogenous hydrophobic electrophiles. Involved in the formation of glutathione conjugates of both prostaglandin A2 (PGA2) and prostaglandin J2 (PGJ2). Participates in the formation of novel hepoxilin regioisomers. Negatively regulates CDK5 activity via p25/p35 translocation to prevent neurodegeneration. This is Glutathione S-transferase P (GSTP1) from Capra hircus (Goat).